Reading from the N-terminus, the 129-residue chain is MLLKVRRASLKPPATPHQGAFRAGNVIGQLIYLLTWSLFTAWLRPPTLLQGPRTSPQGSPPRSPWGDCAEPSCLCEMKIRRRRHEGPAWGQSGFLAGGLHLVPSSLSLAACGVVRMKGLWGRGAGIRGR.

2 consecutive transmembrane segments (helical) span residues 23-43 (AGNVIGQLIYLLTWSLFTAWL) and 94-114 (FLAGGLHLVPSSLSLAACGVV).

It localises to the membrane. This is Transmembrane protein 105 (TMEM105) from Homo sapiens (Human).